A 103-amino-acid chain; its full sequence is Large ribosomal subunit protein bL21 (103 aa).

The protein belongs to the bacterial ribosomal protein bL21 family. As to quaternary structure, part of the 50S ribosomal subunit. Contacts protein L20.

Its function is as follows. This protein binds to 23S rRNA in the presence of protein L20. The sequence is that of Large ribosomal subunit protein bL21 from Shewanella denitrificans (strain OS217 / ATCC BAA-1090 / DSM 15013).